A 570-amino-acid polypeptide reads, in one-letter code: 2-isopropylmalate synthase (570 aa).

Residues 31–305 (PIWMSTDLRD…DPELDFSHIN (275 aa)) enclose the Pyruvate carboxyltransferase domain. Mg(2+) contacts are provided by Asp40, His244, His246, and Asn280. Residues 437–570 (SDGAIGYVSH…RRSSAQATVA (134 aa)) form a regulatory domain region.

It belongs to the alpha-IPM synthase/homocitrate synthase family. LeuA type 2 subfamily. As to quaternary structure, homodimer. Requires Mg(2+) as cofactor.

Its subcellular location is the cytoplasm. It carries out the reaction 3-methyl-2-oxobutanoate + acetyl-CoA + H2O = (2S)-2-isopropylmalate + CoA + H(+). Its pathway is amino-acid biosynthesis; L-leucine biosynthesis; L-leucine from 3-methyl-2-oxobutanoate: step 1/4. Its function is as follows. Catalyzes the condensation of the acetyl group of acetyl-CoA with 3-methyl-2-oxobutanoate (2-ketoisovalerate) to form 3-carboxy-3-hydroxy-4-methylpentanoate (2-isopropylmalate). This is 2-isopropylmalate synthase from Ralstonia pickettii (strain 12J).